We begin with the raw amino-acid sequence, 120 residues long: MDYEFLRDVTGQVIVRFSMGHEVIGHWINEELKGDFNLLDRIEAGAAEVKGSERQWQLEGHEYTLLMDGEEVMIRANLLEFEGEEMEEGMNYYDEESLSFCGVEDFLQVLKAYRSFMLKY.

This sequence belongs to the UPF0231 family.

The sequence is that of UPF0231 protein Spro_4007 from Serratia proteamaculans (strain 568).